The following is a 1437-amino-acid chain: Histone-lysine N-methyltransferase NSD3 (1437 aa).

2 disordered regions span residues 121–157 (PHEILEKPSPPQPPPPPSVPQTVIPKKTGSPEIKLKI) and 181–252 (QASE…PVQP). The span at 128 to 139 (PSPPQPPPPPSV) shows a compositional bias: pro residues. Ser150 is subject to Phosphoserine. A KIKL motif is present at residues 154-157 (KLKI). Residues 187 to 201 (KSKHESRKEKRKKSN) show a composition bias toward basic residues. A compositionally biased stretch (basic and acidic residues) spans 202 to 248 (KHDSSRSEERKSHKIPKLEPEEQNRPNERVDTVSEKPREEPVLKEEA). Residues Lys218 and Lys245 each participate in a glycyl lysine isopeptide (Lys-Gly) (interchain with G-Cter in SUMO2) cross-link. The PWWP 1 domain occupies 270–333 (VGDLVWSKVG…EKRVREYKGH (64 aa)). Disordered regions lie at residues 344–365 (TKQASNHSEKQKIRKPRPQRER) and 406–465 (AKKS…EPPP). A Glycyl lysine isopeptide (Lys-Gly) (interchain with G-Cter in SUMO2) cross-link involves residue Lys413. Positions 425 to 445 (VLNTQPEQTNAGEVASSLSST) are enriched in polar residues. Position 457 is a phosphoserine (Ser457). Residues Lys502 and Lys532 each participate in a glycyl lysine isopeptide (Lys-Gly) (interchain with G-Cter in SUMO2) cross-link. Residues 540–696 (QDRLIISTPN…DSSLSRRGTG (157 aa)) form a disordered region. Residues 546-571 (STPNQRNEKPTQSVSSPEATSGSTGS) show a composition bias toward polar residues. The span at 583 to 595 (TRSESEKSTEVVP) shows a compositional bias: basic and acidic residues. Residues Ser585, Ser587, and Ser590 each carry the phosphoserine modification. A Glycyl lysine isopeptide (Lys-Gly) (interchain with G-Cter in SUMO2) cross-link involves residue Lys628. Ser655 is subject to Phosphoserine. Polar residues predominate over residues 682–692 (DVQSMDSSLSR). 3 consecutive PHD-type zinc fingers follow at residues 701–748 (DTVC…CKTG), 749–805 (QHPC…CSME), and 862–955 (VGFC…CKAG). Residue Lys790 is modified to N6-acetyllysine. The region spanning 960–1022 (YKQIVWVKLG…QGRVFPYVEG (63 aa)) is the PWWP 2 domain. The stretch at 1033 to 1069 (INKTFKKALEEAAKRFQELKAQRESKEALEIEKNSRK) forms a coiled coil. An AWS domain is found at 1093–1143 (SEIPRCNCKPADENPCGLESECLNRMLQYECHPQVCPAGDRCQNQCFTKRL). In terms of domain architecture, SET spans 1145 to 1262 (PDAEIIKTER…AGMELTFNYN (118 aa)). Residue Lys1151 forms a Glycyl lysine isopeptide (Lys-Gly) (interchain with G-Cter in SUMO2) linkage. One can recognise a Post-SET domain in the interval 1269–1285 (GRTECHCGADNCSGFLG). The PHD-type 4; atypical zinc finger occupies 1321–1368 (EDYCFQCGDGGELVMCDKKDCPKAYHLLCLNLTQPPYGKWECPWHQCD).

The protein belongs to the class V-like SAM-binding methyltransferase superfamily. Histone-lysine methyltransferase family. SET2 subfamily. In terms of assembly, interacts with BRD4. Interacts (via KIKL motif) with BRD3 (via NET domain). In terms of tissue distribution, highly expressed in brain, heart and skeletal muscle. Expressed at lower level in liver and lung.

Its subcellular location is the nucleus. The protein resides in the chromosome. It catalyses the reaction L-lysyl(4)-[histone H3] + 2 S-adenosyl-L-methionine = N(6),N(6)-dimethyl-L-lysyl(4)-[histone H3] + 2 S-adenosyl-L-homocysteine + 2 H(+). The catalysed reaction is L-lysyl(27)-[histone H3] + 2 S-adenosyl-L-methionine = N(6),N(6)-dimethyl-L-lysyl(27)-[histone H3] + 2 S-adenosyl-L-homocysteine + 2 H(+). Histone methyltransferase. Preferentially dimethylates 'Lys-4' and 'Lys-27' of histone H3 forming H3K4me2 and H3K27me2. H3 'Lys-4' methylation represents a specific tag for epigenetic transcriptional activation, while 'Lys-27' is a mark for transcriptional repression. In Homo sapiens (Human), this protein is Histone-lysine N-methyltransferase NSD3.